We begin with the raw amino-acid sequence, 322 residues long: MSKKKILITWPLPEAAMARARESYDVIAHGDDPKITIDEMIETAKSVDALLITLNEKCRKEVIDRIPENIKCISTYSIGFDHIDLDACKARGIKVGNAPHGVTVATAEIAMLLLLGSARRAGEGEKMIRTRSWPGWEPLELVGEKLDNKTLGIYGFGSIGQALAKRAQGFDMDIDYFDTHRASSSDEASYQATFHDSLDSLLSVSQFFSLNAPSTPETRYFFNKATIKSLPQGAIVVNTARGDLVDNELVVAALEAGRLAYAGFDVFAGEPNINEGYYDLPNTFLFPHIGSAATQAREDMAHQANDLIDALFGGADMSYALA.

Residues 158 to 159 (SI), D178, 239 to 241 (TAR), and D265 each bind NAD(+). R241 is a catalytic residue. E270 is a catalytic residue. H288 (proton donor) is an active-site residue. 288 to 291 (HIGS) serves as a coordination point for NAD(+).

It belongs to the D-isomer specific 2-hydroxyacid dehydrogenase family. Homodimer.

The enzyme catalyses (R)-glycerate + NAD(+) = 3-hydroxypyruvate + NADH + H(+). Its pathway is one-carbon metabolism; formaldehyde assimilation via serine pathway. Its function is as follows. Active on hydroxypyruvate and glyoxylate. In Hyphomicrobium methylovorum, this protein is Glycerate dehydrogenase.